We begin with the raw amino-acid sequence, 152 residues long: Deoxyuridine 5'-triphosphate nucleotidohydrolase (152 aa).

Residues 62-64 (RSG), Asn75, and 79-81 (TVD) contribute to the substrate site.

Belongs to the dUTPase family. Mg(2+) serves as cofactor.

The enzyme catalyses dUTP + H2O = dUMP + diphosphate + H(+). Its pathway is pyrimidine metabolism; dUMP biosynthesis; dUMP from dCTP (dUTP route): step 2/2. Functionally, this enzyme is involved in nucleotide metabolism: it produces dUMP, the immediate precursor of thymidine nucleotides and it decreases the intracellular concentration of dUTP so that uracil cannot be incorporated into DNA. The protein is Deoxyuridine 5'-triphosphate nucleotidohydrolase of Leifsonia xyli subsp. xyli (strain CTCB07).